A 428-amino-acid chain; its full sequence is MIKIPRGTQDILPDQSRKWRYIEAKLDELMELYNYKEIRTPIFESTDLFARGVGDSTDVVQKEMYTFKDKGDRSITLRPEGTAAVVRSYIENKMQGDPNQPIKLYYNGPMFRYERKQKGRYRQFNQFGVEAIGAQDPSIDAEILAMVMHIYQSFGLKHLKLVINSVGDFDSRKEYNKALIEHFEPVIDTFCNDCQARLYTNPMRILDCKVDRDKEAVKTAPRITDYLNEESKEYFNQVKQYLDDLNIPYVEDPNLVRGLDYYTHTAFELMIDSPDYDGAITTLCGGGRYNGLLELLDGPKQTGIGFALSIERLLLALEEEGIEIEEDEHLDLFIVTMGEKADRYAVNLLNDLRHHGIKADKDYLKRKIKGQMKQANRVGAEYTIVIGEQELEDGNIDIKHMDSGETDSIHLADLVSYFENKKEKQGEK.

This sequence belongs to the class-II aminoacyl-tRNA synthetase family. In terms of assembly, homodimer.

The protein resides in the cytoplasm. The catalysed reaction is tRNA(His) + L-histidine + ATP = L-histidyl-tRNA(His) + AMP + diphosphate + H(+). This chain is Histidine--tRNA ligase, found in Staphylococcus carnosus (strain TM300).